Here is a 349-residue protein sequence, read N- to C-terminus: Nuclear distribution protein nudE homolog 1-A (349 aa).

Residues 22–189 (VAMKYKQCSE…ELAVQQKQEK (168 aa)) are a coiled coil.

Belongs to the nudE family. In terms of assembly, self-associates. Interacts with pafah1b1. Post-translationally, phosphorylated in mitosis.

It is found in the cytoplasm. It localises to the cytoskeleton. The protein resides in the microtubule organizing center. Its subcellular location is the centrosome. The protein localises to the spindle. It is found in the chromosome. It localises to the centromere. The protein resides in the kinetochore. Its subcellular location is the cleavage furrow. The protein localises to the cytoplasmic vesicle membrane. Its function is as follows. Required for centrosome duplication and formation and function of the mitotic spindle. In Xenopus laevis (African clawed frog), this protein is Nuclear distribution protein nudE homolog 1-A (nde1-a).